The primary structure comprises 501 residues: NAD(P)H-quinone oxidoreductase chain 4, chloroplastic (501 aa).

The next 14 helical transmembrane spans lie at 4-24, 35-55, 87-107, 113-133, 134-154, 167-187, 211-231, 242-262, 274-294, 310-330, 331-351, 386-406, 416-436, and 464-484; these read FPWL…IPFF, YTLG…CYYF, IGLI…AWPV, LFYF…ASQD, ILLF…LLCI, FILY…TMGF, IILY…FPLH, HYST…YGLI, SIFA…AALI, ISHM…GLNG, AILQ…LAGI, LALP…GIVV, ILVT…LLSM, and IFIL…PNSV.

It belongs to the complex I subunit 4 family.

It is found in the plastid. It localises to the chloroplast thylakoid membrane. The catalysed reaction is a plastoquinone + NADH + (n+1) H(+)(in) = a plastoquinol + NAD(+) + n H(+)(out). It catalyses the reaction a plastoquinone + NADPH + (n+1) H(+)(in) = a plastoquinol + NADP(+) + n H(+)(out). The sequence is that of NAD(P)H-quinone oxidoreductase chain 4, chloroplastic from Physcomitrium patens (Spreading-leaved earth moss).